Reading from the N-terminus, the 184-residue chain is Holliday junction branch migration complex subunit RuvA (184 aa).

Residues 1 to 61 (MIAALRGNIF…ENEYTLYGFA (61 aa)) form a domain I region. The domain II stretch occupies residues 62–135 (DKNEKKLFDS…GEFEVVFEEQ (74 aa)). Position 135 (glutamine 135) is a region of interest, flexible linker. The interval 135-184 (QNPVFNQALSALESLGFNKNDIVKALNGIKSDNLEETIKLALKKLSKDIK) is domain III.

The protein belongs to the RuvA family. As to quaternary structure, homotetramer. Forms an RuvA(8)-RuvB(12)-Holliday junction (HJ) complex. HJ DNA is sandwiched between 2 RuvA tetramers; dsDNA enters through RuvA and exits via RuvB. An RuvB hexamer assembles on each DNA strand where it exits the tetramer. Each RuvB hexamer is contacted by two RuvA subunits (via domain III) on 2 adjacent RuvB subunits; this complex drives branch migration. In the full resolvosome a probable DNA-RuvA(4)-RuvB(12)-RuvC(2) complex forms which resolves the HJ.

The protein localises to the cytoplasm. In terms of biological role, the RuvA-RuvB-RuvC complex processes Holliday junction (HJ) DNA during genetic recombination and DNA repair, while the RuvA-RuvB complex plays an important role in the rescue of blocked DNA replication forks via replication fork reversal (RFR). RuvA specifically binds to HJ cruciform DNA, conferring on it an open structure. The RuvB hexamer acts as an ATP-dependent pump, pulling dsDNA into and through the RuvAB complex. HJ branch migration allows RuvC to scan DNA until it finds its consensus sequence, where it cleaves and resolves the cruciform DNA. The chain is Holliday junction branch migration complex subunit RuvA from Nautilia profundicola (strain ATCC BAA-1463 / DSM 18972 / AmH).